We begin with the raw amino-acid sequence, 683 residues long: DNA ligase (683 aa).

NAD(+)-binding positions include 35–39 (DTEYD), 84–85 (SL), and Glu-116. The active-site N6-AMP-lysine intermediate is the Lys-118. Residues Arg-139, Glu-176, Lys-293, and Lys-317 each contribute to the NAD(+) site. Residues Cys-419, Cys-422, Cys-437, and Cys-443 each contribute to the Zn(2+) site. Positions 602–683 (AGPQLLAGKT…LMKLLAKGVE (82 aa)) constitute a BRCT domain.

This sequence belongs to the NAD-dependent DNA ligase family. LigA subfamily. Mg(2+) is required as a cofactor. Requires Mn(2+) as cofactor.

It catalyses the reaction NAD(+) + (deoxyribonucleotide)n-3'-hydroxyl + 5'-phospho-(deoxyribonucleotide)m = (deoxyribonucleotide)n+m + AMP + beta-nicotinamide D-nucleotide.. DNA ligase that catalyzes the formation of phosphodiester linkages between 5'-phosphoryl and 3'-hydroxyl groups in double-stranded DNA using NAD as a coenzyme and as the energy source for the reaction. It is essential for DNA replication and repair of damaged DNA. This is DNA ligase from Dechloromonas aromatica (strain RCB).